A 542-amino-acid chain; its full sequence is Glutamyl-tRNA(Gln) amidotransferase subunit B, mitochondrial (542 aa).

This sequence belongs to the GatB/GatE family. GatB subfamily. Subunit of the heterotrimeric GatFAB amidotransferase (AdT) complex, composed of A, B and F subunits.

Its subcellular location is the mitochondrion. It carries out the reaction L-glutamyl-tRNA(Gln) + L-glutamine + ATP + H2O = L-glutaminyl-tRNA(Gln) + L-glutamate + ADP + phosphate + H(+). In terms of biological role, allows the formation of correctly charged Gln-tRNA(Gln) through the transamidation of misacylated Glu-tRNA(Gln) in the mitochondria. The reaction takes place in the presence of glutamine and ATP through an activated gamma-phospho-Glu-tRNA(Gln). This chain is Glutamyl-tRNA(Gln) amidotransferase subunit B, mitochondrial, found in Candida glabrata (strain ATCC 2001 / BCRC 20586 / JCM 3761 / NBRC 0622 / NRRL Y-65 / CBS 138) (Yeast).